The primary structure comprises 158 residues: Transcription elongation factor GreA (158 aa).

Residues 4 to 70 (QKQYPMTQEG…IEQDIQRIEH (67 aa)) are a coiled coil.

Belongs to the GreA/GreB family.

Necessary for efficient RNA polymerase transcription elongation past template-encoded arresting sites. The arresting sites in DNA have the property of trapping a certain fraction of elongating RNA polymerases that pass through, resulting in locked ternary complexes. Cleavage of the nascent transcript by cleavage factors such as GreA or GreB allows the resumption of elongation from the new 3'terminus. GreA releases sequences of 2 to 3 nucleotides. This is Transcription elongation factor GreA from Staphylococcus aureus (strain Mu3 / ATCC 700698).